The chain runs to 222 residues: Large ribosomal subunit protein mL64 (222 aa).

2 disordered regions span residues 19-46 (APGS…EDLL) and 188-222 (KRLK…APSS). The span at 25–36 (YRARPPPRRRPG) shows a compositional bias: basic residues. Positions 99-212 (MQESLRVKQL…AAALAAAVAQ (114 aa)) form a coiled coil. The Nuclear localization signal signature appears at 184–200 (KKERKRLKEEKQKRKKE). The segment covering 203-212 (AAALAAAVAQ) has biased composition (low complexity).

The protein belongs to the mitochondrion-specific ribosomal protein mL64 family. As to quaternary structure, component of the mitochondrial large ribosomal subunit (mt-LSU). Mature mammalian 55S mitochondrial ribosomes consist of a small (28S) and a large (39S) subunit. The 28S small subunit contains a 12S ribosomal RNA (12S mt-rRNA) and 30 different proteins. The 39S large subunit contains a 16S rRNA (16S mt-rRNA), a copy of mitochondrial valine transfer RNA (mt-tRNA(Val)), which plays an integral structural role, and 52 different proteins. Interacts with GADD45A, GADD45B and GADD45G. Interacts with NR4A1 via the NR4A1 AB domain. Interacts with ATAD3A and ATAD3B. In terms of assembly, (Microbial infection) Interacts with the human papilloma virus type 16 (HPV 16) minor capsid protein L2. As to expression, widely expressed. Highly expressed in the thyroid gland, heart, lymph nodes, trachea and adrenal tissues. Expressed at lower level in liver skeletal muscle, kidney, pancreas, testis, ovary and stomach. Barely detectable in adrenal adenoma and papillary thyroid cancer.

It localises to the mitochondrion. The protein localises to the nucleus. Functionally, acts as a negative regulator of G1 to S cell cycle phase progression by inhibiting cyclin-dependent kinases. Inhibitory effects are additive with GADD45 proteins but also occur in the absence of GADD45 proteins. Acts as a repressor of the orphan nuclear receptor NR4A1 by inhibiting AB domain-mediated transcriptional activity. May be involved in the hormone-mediated regulation of NR4A1 transcriptional activity. May play a role in mitochondrial protein synthesis. The protein is Large ribosomal subunit protein mL64 (GADD45GIP1) of Homo sapiens (Human).